A 383-amino-acid chain; its full sequence is Lipid-A-disaccharide synthase (383 aa).

This sequence belongs to the LpxB family.

It catalyses the reaction 2-N,3-O-bis[(3R)-3-hydroxytetradecanoyl]-alpha-D-glucosaminyl 1-phosphate + UDP-2-N,3-O-bis[(3R)-3-hydroxytetradecanoyl]-alpha-D-glucosamine = lipid A disaccharide (E. coli) + UDP + H(+). The catalysed reaction is a lipid X + a UDP-2-N,3-O-bis[(3R)-3-hydroxyacyl]-alpha-D-glucosamine = a lipid A disaccharide + UDP + H(+). The protein operates within glycolipid biosynthesis; lipid IV(A) biosynthesis; lipid IV(A) from (3R)-3-hydroxytetradecanoyl-[acyl-carrier-protein] and UDP-N-acetyl-alpha-D-glucosamine: step 5/6. In terms of biological role, condensation of UDP-2,3-diacylglucosamine and 2,3-diacylglucosamine-1-phosphate to form lipid A disaccharide, a precursor of lipid A, a phosphorylated glycolipid that anchors the lipopolysaccharide to the outer membrane of the cell. This is Lipid-A-disaccharide synthase from Klebsiella pneumoniae subsp. pneumoniae (strain ATCC 700721 / MGH 78578).